The sequence spans 393 residues: (S)-mandelate dehydrogenase (393 aa).

In terms of domain architecture, FMN hydroxy acid dehydrogenase spans 1 to 377 (MSQNLFNVED…SPDYLQNEGV (377 aa)). Tyrosine 26 provides a ligand contact to (S)-mandelate. FMN is bound by residues 79-81 (PTG), serine 108, and glutamine 129. Position 131 (tyrosine 131) interacts with (S)-mandelate. Threonine 156 provides a ligand contact to FMN. Arginine 165 is a (S)-mandelate binding site. Lysine 250 contributes to the FMN binding site. Residues histidine 274 and arginine 277 each coordinate (S)-mandelate. Catalysis depends on histidine 274, which acts as the Proton acceptor. Residues 303 to 307 (DSGFR) and 326 to 327 (GR) each bind FMN.

The protein belongs to the FMN-dependent alpha-hydroxy acid dehydrogenase family. As to quaternary structure, homotetramer. Requires FMN as cofactor.

It localises to the cell inner membrane. It catalyses the reaction (S)-mandelate + A = phenylglyoxylate + AH2. The protein operates within aromatic compound metabolism; (R)-mandelate degradation; benzoate from (R)-mandelate: step 2/4. Its function is as follows. Catalyzes the dehydrogenation of (S)-mandelate to phenylglyoxylate (benzoylformate). Is likely involved in the utilization of mandelate as a sole source of carbon and energy for growth. Active in vitro with the artificial electron acceptors 2,6-dichlorophenolindophenol (DCPIP) or ferricyanide, but in vivo most likely transfer the electron pair from the reduced flavin to a component of the electron transport chain in the membrane, possibly a quinone. Shows very low activity with oxygen as the electron acceptor, and also with 3-indolelactate and medium chain 2-hydroxyacids as substrates. The sequence is that of (S)-mandelate dehydrogenase from Pseudomonas putida (Arthrobacter siderocapsulatus).